Reading from the N-terminus, the 517-residue chain is Benzoate 4-monooxygenase bphA (517 aa).

The helical transmembrane segment at 4–24 threads the bilayer; it reads LLLSPYGAYLGLALLVLYYLL. 2 N-linked (GlcNAc...) asparagine glycosylation sites follow: asparagine 282 and asparagine 325. Cysteine 461 provides a ligand contact to heme.

Belongs to the cytochrome P450 family. Heme serves as cofactor.

The protein localises to the membrane. The enzyme catalyses benzoate + reduced [NADPH--hemoprotein reductase] + O2 = 4-hydroxybenzoate + oxidized [NADPH--hemoprotein reductase] + H2O + H(+). Cytochrome P450 monooxygenase; part of the benzoic acid degradation pathway also known as the protocatechuic acid pathway. Benzoic acid debradation begins with the conversion of benzoic acid into 4-hydroxybenzoic acid through hydroxylation by the benzoate-4-monooxygenase bphA, and its partner NADPH-cytochrome P450 reductase cprA which act as a mediator in electron donation from NADPH. 4-Hydroxybenzoic acid is then converted into 3,4-dihydroxybenzoic acid (also called protocatechuic acid) by the p-hydroxybenzoate-m-hydroxylase phhA. Protocatechuic acid is converted into 3-carboxy-cis,cis-muconic acid by the intradiol ring-cleavage dioxygenase prcA, which is further metabolized through the 3-oxoadipate pathway to finally enter the tricarboxylic acid cycle (TCA). This Aspergillus niger (strain ATCC MYA-4892 / CBS 513.88 / FGSC A1513) protein is Benzoate 4-monooxygenase bphA.